Reading from the N-terminus, the 279-residue chain is Pantothenate synthetase (279 aa).

26-33 contributes to the ATP binding site; it reads MGNLHDGH. His33 functions as the Proton donor in the catalytic mechanism. Residue Gln57 coordinates (R)-pantoate. Residue Gln57 participates in beta-alanine binding. 144–147 serves as a coordination point for ATP; it reads GKKD. A (R)-pantoate-binding site is contributed by Gln150. 181 to 184 serves as a coordination point for ATP; sequence LSSR.

Belongs to the pantothenate synthetase family. Homodimer.

The protein localises to the cytoplasm. It carries out the reaction (R)-pantoate + beta-alanine + ATP = (R)-pantothenate + AMP + diphosphate + H(+). It participates in cofactor biosynthesis; (R)-pantothenate biosynthesis; (R)-pantothenate from (R)-pantoate and beta-alanine: step 1/1. In terms of biological role, catalyzes the condensation of pantoate with beta-alanine in an ATP-dependent reaction via a pantoyl-adenylate intermediate. This is Pantothenate synthetase from Herminiimonas arsenicoxydans.